Here is an 85-residue protein sequence, read N- to C-terminus: Large ribosomal subunit protein bL27 (85 aa).

Residues 1-22 are disordered; the sequence is MAHKKGGGSSRNGRDSNAQRRG.

Belongs to the bacterial ribosomal protein bL27 family.

This is Large ribosomal subunit protein bL27 from Sorangium cellulosum (strain So ce56) (Polyangium cellulosum (strain So ce56)).